A 209-amino-acid polypeptide reads, in one-letter code: MKKAILGKKLGMTQIFNENGKVIPVTVIEAGPCTVIQKKTVEKDGYEAIQVAFGDIREKLRNKPVKGHFAKAGVSVKRHIKEFKLEDSNSLEIGQEIKADVFEAGERVDISGVSKGKGFQGTIRRWNAHRGPMTHGSKFHRAVGSMGASSDPSRTFKNKRMPGHMGNVNTTVLNLEVVRIIPEKNLILIKGGVPGPNKGLVQIRNTVKA.

Residues alanine 128 to glycine 163 are disordered.

Belongs to the universal ribosomal protein uL3 family. As to quaternary structure, part of the 50S ribosomal subunit. Forms a cluster with proteins L14 and L19.

Its function is as follows. One of the primary rRNA binding proteins, it binds directly near the 3'-end of the 23S rRNA, where it nucleates assembly of the 50S subunit. The protein is Large ribosomal subunit protein uL3 of Clostridium botulinum (strain 657 / Type Ba4).